The sequence spans 359 residues: 3-dehydroquinate synthase (359 aa).

Residues 70–75 (DGEQYK), 105–109 (GVIGD), 129–130 (TT), lysine 142, lysine 151, and 169–172 (FYKT) each bind NAD(+). Zn(2+)-binding residues include glutamate 184, histidine 247, and histidine 264.

The protein belongs to the sugar phosphate cyclases superfamily. Dehydroquinate synthase family. Co(2+) is required as a cofactor. The cofactor is Zn(2+). NAD(+) serves as cofactor.

The protein resides in the cytoplasm. It carries out the reaction 7-phospho-2-dehydro-3-deoxy-D-arabino-heptonate = 3-dehydroquinate + phosphate. The protein operates within metabolic intermediate biosynthesis; chorismate biosynthesis; chorismate from D-erythrose 4-phosphate and phosphoenolpyruvate: step 2/7. Catalyzes the conversion of 3-deoxy-D-arabino-heptulosonate 7-phosphate (DAHP) to dehydroquinate (DHQ). This chain is 3-dehydroquinate synthase, found in Francisella tularensis subsp. mediasiatica (strain FSC147).